The following is a 619-amino-acid chain: Mitochondrial Rho GTPase 1 (619 aa).

The Cytoplasmic portion of the chain corresponds to 1 to 593 (MKKDVRILLV…TQADLKSSTF (593 aa)). Residues 2 to 168 (KKDVRILLVG…FYYAQKAVLH (167 aa)) enclose the Miro 1 domain. The GTP site is built by Arg14, Gly16, Lys17, Thr18, and Ser19. Thr18 contacts Mg(2+). Residues Pro35 and Asp57 each coordinate Mg(2+). Residues Ser59, Asn118, Lys119, Asp121, Ala149, and Lys150 each coordinate GTP. EF-hand domains are found at residues 184-219 (ACIKALTRIFRISDQDNDGTLNDAELNFFQRICFNT) and 304-339 (HAYLFLQSIFDKHDLDRDCALSPDELKDLFKVFPYM). 10 residues coordinate Ca(2+): Asp197, Asp199, Asp201, Thr203, Glu208, Asp317, Asp319, Asp321, Ala323, and Glu328. Residues 417–580 (RNVFRCNVVG…FVKLTTMAMY (164 aa)) form the Miro 2 domain. Gly429, Cys430, Gly431, Lys432, Ser433, Gly434, Arg448, Lys529, Asp531, Thr559, and Cys560 together coordinate GTP. Gly429 lines the Mg(2+) pocket. A helical; Anchor for type IV membrane protein transmembrane segment spans residues 594 to 616 (WLRASFGATVFAFLGFAMYKALI). Residues 617-619 (KQR) are Mitochondrial intermembrane-facing.

The protein belongs to the mitochondrial Rho GTPase family. In terms of assembly, homodimer.

The protein resides in the mitochondrion outer membrane. It carries out the reaction GTP + H2O = GDP + phosphate + H(+). The catalysed reaction is ATP + H2O = ADP + phosphate + H(+). It catalyses the reaction UTP + H2O = UDP + phosphate + H(+). In terms of biological role, atypical mitochondrial nucleoside-triphosphatase (NTPase) involved in mitochondrial trafficking. Probably involved in control of anterograde transport of mitochondria and their subcellular distribution. Can hydrolyze GTP, ATP and UTP. In Gallus gallus (Chicken), this protein is Mitochondrial Rho GTPase 1 (RHOT1).